The chain runs to 104 residues: Cell division protein FtsL (104 aa).

Over 1-20 (MSKPSLTLPRIVLHDLWQHK) the chain is Cytoplasmic. A helical transmembrane segment spans residues 21–43 (WILLLALLVLSNAVAVVYTSHVS). At 44–104 (RKLTTEWDQL…PSEEIVVKVP (61 aa)) the chain is on the periplasmic side.

Belongs to the FtsL family. As to quaternary structure, part of a complex composed of FtsB, FtsL and FtsQ.

The protein localises to the cell inner membrane. Functionally, essential cell division protein. May link together the upstream cell division proteins, which are predominantly cytoplasmic, with the downstream cell division proteins, which are predominantly periplasmic. This chain is Cell division protein FtsL, found in Shewanella oneidensis (strain ATCC 700550 / JCM 31522 / CIP 106686 / LMG 19005 / NCIMB 14063 / MR-1).